The sequence spans 400 residues: Queuine tRNA-ribosyltransferase (400 aa).

Asp93 functions as the Proton acceptor in the catalytic mechanism. Substrate-binding positions include 93–97 (DSGGF), Asp147, Gln190, and Gly217. The segment at 248 to 254 (GVGSPED) is RNA binding. Asp267 acts as the Nucleophile in catalysis. An RNA binding; important for wobble base 34 recognition region spans residues 272–276 (TRIAR). Zn(2+) is bound by residues Cys305, Cys307, Cys310, and His336. A disordered region spans residues 375 to 400 (RRERARAAGGAGHAPGPAEPLLPENR). The span at 388–400 (APGPAEPLLPENR) shows a compositional bias: low complexity.

Belongs to the queuine tRNA-ribosyltransferase family. In terms of assembly, homodimer. Within each dimer, one monomer is responsible for RNA recognition and catalysis, while the other monomer binds to the replacement base PreQ1. Zn(2+) serves as cofactor.

The enzyme catalyses 7-aminomethyl-7-carbaguanine + guanosine(34) in tRNA = 7-aminomethyl-7-carbaguanosine(34) in tRNA + guanine. It functions in the pathway tRNA modification; tRNA-queuosine biosynthesis. Catalyzes the base-exchange of a guanine (G) residue with the queuine precursor 7-aminomethyl-7-deazaguanine (PreQ1) at position 34 (anticodon wobble position) in tRNAs with GU(N) anticodons (tRNA-Asp, -Asn, -His and -Tyr). Catalysis occurs through a double-displacement mechanism. The nucleophile active site attacks the C1' of nucleotide 34 to detach the guanine base from the RNA, forming a covalent enzyme-RNA intermediate. The proton acceptor active site deprotonates the incoming PreQ1, allowing a nucleophilic attack on the C1' of the ribose to form the product. After dissociation, two additional enzymatic reactions on the tRNA convert PreQ1 to queuine (Q), resulting in the hypermodified nucleoside queuosine (7-(((4,5-cis-dihydroxy-2-cyclopenten-1-yl)amino)methyl)-7-deazaguanosine). The protein is Queuine tRNA-ribosyltransferase of Symbiobacterium thermophilum (strain DSM 24528 / JCM 14929 / IAM 14863 / T).